The following is a 348-amino-acid chain: tRNA pseudouridine synthase D (348 aa).

D81 acts as the Nucleophile in catalysis. The TRUD domain maps to 158–304; the sequence is GVPNYFGAQR…MRHERRSIEL (147 aa).

It belongs to the pseudouridine synthase TruD family.

It carries out the reaction uridine(13) in tRNA = pseudouridine(13) in tRNA. In terms of biological role, responsible for synthesis of pseudouridine from uracil-13 in transfer RNAs. The chain is tRNA pseudouridine synthase D from Aliivibrio salmonicida (strain LFI1238) (Vibrio salmonicida (strain LFI1238)).